We begin with the raw amino-acid sequence, 628 residues long: tRNA 5-methylaminomethyl-2-thiouridine biosynthesis bifunctional protein MnmC (628 aa).

Residues 1–237 are tRNA (mnm(5)s(2)U34)-methyltransferase; that stretch reads MSSYSPLVPP…KWHMTVGVRE (237 aa). The segment at 265 to 628 is FAD-dependent cmnm(5)s(2)U34 oxidoreductase; the sequence is VGGGLAGAGI…ADLLAAVAPR (364 aa).

The protein in the N-terminal section; belongs to the methyltransferase superfamily. tRNA (mnm(5)s(2)U34)-methyltransferase family. In the C-terminal section; belongs to the DAO family. Requires FAD as cofactor.

Its subcellular location is the cytoplasm. The enzyme catalyses 5-aminomethyl-2-thiouridine(34) in tRNA + S-adenosyl-L-methionine = 5-methylaminomethyl-2-thiouridine(34) in tRNA + S-adenosyl-L-homocysteine + H(+). In terms of biological role, catalyzes the last two steps in the biosynthesis of 5-methylaminomethyl-2-thiouridine (mnm(5)s(2)U) at the wobble position (U34) in tRNA. Catalyzes the FAD-dependent demodification of cmnm(5)s(2)U34 to nm(5)s(2)U34, followed by the transfer of a methyl group from S-adenosyl-L-methionine to nm(5)s(2)U34, to form mnm(5)s(2)U34. In Bordetella petrii (strain ATCC BAA-461 / DSM 12804 / CCUG 43448), this protein is tRNA 5-methylaminomethyl-2-thiouridine biosynthesis bifunctional protein MnmC.